The primary structure comprises 212 residues: Pyridoxine/pyridoxamine 5'-phosphate oxidase (212 aa).

Substrate contacts are provided by residues R8–Y11 and K66. FMN contacts are provided by residues R61–K66, F76–T77, R82, K83, and Q105. Positions 123, 127, and 131 each coordinate substrate. FMN contacts are provided by residues Q140–S141 and W184. R190–H192 provides a ligand contact to substrate. An FMN-binding site is contributed by R194.

Belongs to the pyridoxamine 5'-phosphate oxidase family. In terms of assembly, homodimer. FMN is required as a cofactor.

The catalysed reaction is pyridoxamine 5'-phosphate + O2 + H2O = pyridoxal 5'-phosphate + H2O2 + NH4(+). The enzyme catalyses pyridoxine 5'-phosphate + O2 = pyridoxal 5'-phosphate + H2O2. The protein operates within cofactor metabolism; pyridoxal 5'-phosphate salvage; pyridoxal 5'-phosphate from pyridoxamine 5'-phosphate: step 1/1. It functions in the pathway cofactor metabolism; pyridoxal 5'-phosphate salvage; pyridoxal 5'-phosphate from pyridoxine 5'-phosphate: step 1/1. Functionally, catalyzes the oxidation of either pyridoxine 5'-phosphate (PNP) or pyridoxamine 5'-phosphate (PMP) into pyridoxal 5'-phosphate (PLP). This Cupriavidus pinatubonensis (strain JMP 134 / LMG 1197) (Cupriavidus necator (strain JMP 134)) protein is Pyridoxine/pyridoxamine 5'-phosphate oxidase.